The primary structure comprises 458 residues: Argininosuccinate lyase (458 aa).

Belongs to the lyase 1 family. Argininosuccinate lyase subfamily.

The protein localises to the cytoplasm. The enzyme catalyses 2-(N(omega)-L-arginino)succinate = fumarate + L-arginine. It participates in amino-acid biosynthesis; L-arginine biosynthesis; L-arginine from L-ornithine and carbamoyl phosphate: step 3/3. In Glaesserella parasuis serovar 5 (strain SH0165) (Haemophilus parasuis), this protein is Argininosuccinate lyase.